The sequence spans 217 residues: Lipoprotein CseA (217 aa).

An N-terminal signal peptide occupies residues 1 to 34; sequence MRGLGTESLRARGALKAAIAAVAGLAVLGLSVSA. Cys-35 carries N-palmitoyl cysteine lipidation. Cys-35 is lipidated: S-diacylglycerol cysteine. Disordered stretches follow at residues 39–66 and 192–217; these read GTGARDEGPAGSDSVAAGAATPTVSPSK and FSEESRTHTEYSNAVGGTDSATPAPN.

The protein resides in the cell membrane. May be involved in the stabilization of the cell envelope or may interact with the sensor protein CseC to modulate its activity, in response to cell envelope stress. In Streptomyces avermitilis (strain ATCC 31267 / DSM 46492 / JCM 5070 / NBRC 14893 / NCIMB 12804 / NRRL 8165 / MA-4680), this protein is Lipoprotein CseA (cseA).